Reading from the N-terminus, the 271-residue chain is Acyl-[acyl-carrier-protein]--UDP-N-acetylglucosamine O-acyltransferase (271 aa).

This sequence belongs to the transferase hexapeptide repeat family. LpxA subfamily. In terms of assembly, homotrimer.

Its subcellular location is the cytoplasm. It catalyses the reaction a (3R)-hydroxyacyl-[ACP] + UDP-N-acetyl-alpha-D-glucosamine = a UDP-3-O-[(3R)-3-hydroxyacyl]-N-acetyl-alpha-D-glucosamine + holo-[ACP]. Its pathway is glycolipid biosynthesis; lipid IV(A) biosynthesis; lipid IV(A) from (3R)-3-hydroxytetradecanoyl-[acyl-carrier-protein] and UDP-N-acetyl-alpha-D-glucosamine: step 1/6. Its function is as follows. Involved in the biosynthesis of lipid A, a phosphorylated glycolipid that anchors the lipopolysaccharide to the outer membrane of the cell. This Rhizobium rhizogenes (strain K84 / ATCC BAA-868) (Agrobacterium radiobacter) protein is Acyl-[acyl-carrier-protein]--UDP-N-acetylglucosamine O-acyltransferase.